Here is a 264-residue protein sequence, read N- to C-terminus: MFVPSGDSVPDLAGCTLLMPAVSVGNVGQLAIDLIISTLNMHKIGYFYTDCLVPMVGNNPYATAEENSAELSINAEVYALPSKKLVALQLRSIFIKYKSKSFCEKLLSWVKCSGCAKVVVLSSSHSYHRNDLQLRSTPFRYLLTPSMQKSVQNKIQSLNWEEMEKTPCIPEIDDSEFCVRVPGGGITKLLYDEGCSKEIPIAILLKFVSEGDNIPDALGLVEYLNEWLQIIKPHCEDPTASSLPWKMPSSWRLLFGSGLPPALF.

Phosphothreonine is present on Thr137.

It belongs to the PSMG2 family. As to quaternary structure, forms a heterodimer with PSMG1. The PSMG1-PSMG2 heterodimer interacts directly with the PSMA5 and PSMA7 proteasome alpha subunits. Post-translationally, degraded by the proteasome upon completion of 20S proteasome maturation.

Its subcellular location is the nucleus. Chaperone protein which promotes assembly of the 20S proteasome as part of a heterodimer with PSMG1. The PSMG1-PSMG2 heterodimer binds to the PSMA5 and PSMA7 proteasome subunits, promotes assembly of the proteasome alpha subunits into the heteroheptameric alpha ring and prevents alpha ring dimerization. In Bos taurus (Bovine), this protein is Proteasome assembly chaperone 2.